A 273-amino-acid polypeptide reads, in one-letter code: 2,3,4,5-tetrahydropyridine-2,6-dicarboxylate N-succinyltransferase (273 aa).

Residues Arg-104 and Asp-141 each contribute to the substrate site.

The protein belongs to the transferase hexapeptide repeat family. In terms of assembly, homotrimer.

It is found in the cytoplasm. It carries out the reaction (S)-2,3,4,5-tetrahydrodipicolinate + succinyl-CoA + H2O = (S)-2-succinylamino-6-oxoheptanedioate + CoA. The protein operates within amino-acid biosynthesis; L-lysine biosynthesis via DAP pathway; LL-2,6-diaminopimelate from (S)-tetrahydrodipicolinate (succinylase route): step 1/3. The polypeptide is 2,3,4,5-tetrahydropyridine-2,6-dicarboxylate N-succinyltransferase (Buchnera aphidicola subsp. Schizaphis graminum (strain Sg)).